The sequence spans 623 residues: MLVLCSRSRLTSSLIRRLKDQIANVSNHRSFATSEGHRLAIVNKRSLDILQDPWFNKGTAFSMTERDRLDLRGLLPPNVMTTEQQIERFTADLRVLELTTKDGPSDTYDLAKWRILNRLHDRNETMFFKVLIENIEEYAPIVSTPTVGLVCQKFSGLYRRPRGMYFSSDDRGEMMSMVYNWPAEQVDMIVVTDGSRILGLGDLGVHGIGVAIGKLDLYVAAAGINPQRVLPVMIDVGTNNEDLLKNPLYLGLQKKRLDGEEYLAVMDEFMEAVFTRWPNVIVQFEDIQNKWALTLLQRYRHKYRTFNVDVQGTSGVAIAGLLGAVRAQGRPMIDFPKQKIVVAGAGSSGVGVLNAARKTMARMLGNDESAFDRARSQFWVVDDKGLITEKRANLDPEVQPFAWKENEISLQGLNEGAKLVEVVRQVKPDVLLGLSAYGGLFSKEVLEALKDSTSTRPAIFAMSNPTKNAECTPEEAFSIVGDHVVYASGSPFKDVDLGNGKIGHVNQGNNMYLFPGIGLGVLLSGSRIISDSMFQAAAERLAGYMTDEEVINGVIYPSISRIRDITKEVAAAVIKEAVEEDLAEGYRDMDARELQKLNEEQILEYIEKNMWNPEYPTLVYKKR.

The N-terminal 31 residues, 1 to 31 (MLVLCSRSRLTSSLIRRLKDQIANVSNHRSF), are a transit peptide targeting the mitochondrion. Positions 88 and 122 each coordinate fumarate. The active-site Proton donor is the serine 143. Arginine 196 lines the (S)-malate pocket. Arginine 196 lines the NAD(+) pocket. Residue lysine 214 is the Proton acceptor of the active site. Residues glutamate 285 and aspartate 286 each coordinate a divalent metal cation. Asparagine 289 provides a ligand contact to NAD(+). Aspartate 309 serves as a coordination point for a divalent metal cation. Alanine 345 is a binding site for NAD(+). The (S)-malate site is built by asparagine 464 and asparagine 509.

The protein belongs to the malic enzymes family. In terms of assembly, heterodimer of two related subunits. The cofactor is Mg(2+). Mn(2+) serves as cofactor.

It is found in the mitochondrion matrix. It carries out the reaction (S)-malate + NAD(+) = pyruvate + CO2 + NADH. The protein operates within photosynthesis; C4 acid pathway. The polypeptide is NAD-dependent malic enzyme, mitochondrial (Amaranthus hypochondriacus (Prince-of-Wales feather)).